The sequence spans 415 residues: Adenylosuccinate synthetase (415 aa).

GTP contacts are provided by residues Gly12–Lys18 and Gly40–Thr42. Asp13 serves as the catalytic Proton acceptor. Asp13 and Gly40 together coordinate Mg(2+). Residues Asp13–Lys16, Asn38–His41, Thr125, Arg139, Gln219, Thr234, and Arg298 each bind IMP. Catalysis depends on His41, which acts as the Proton donor. Thr294–Arg300 contributes to the substrate binding site. GTP-binding positions include Arg300, Lys326 to Asp328, and Ser404 to Gly406.

The protein belongs to the adenylosuccinate synthetase family. As to quaternary structure, homodimer. Requires Mg(2+) as cofactor.

It is found in the cytoplasm. It carries out the reaction IMP + L-aspartate + GTP = N(6)-(1,2-dicarboxyethyl)-AMP + GDP + phosphate + 2 H(+). Its pathway is purine metabolism; AMP biosynthesis via de novo pathway; AMP from IMP: step 1/2. In terms of biological role, plays an important role in the de novo pathway of purine nucleotide biosynthesis. Catalyzes the first committed step in the biosynthesis of AMP from IMP. In Wolinella succinogenes (strain ATCC 29543 / DSM 1740 / CCUG 13145 / JCM 31913 / LMG 7466 / NCTC 11488 / FDC 602W) (Vibrio succinogenes), this protein is Adenylosuccinate synthetase.